A 96-amino-acid chain; its full sequence is Large ribosomal subunit protein uL23 (96 aa).

This sequence belongs to the universal ribosomal protein uL23 family. In terms of assembly, part of the 50S ribosomal subunit. Contacts protein L29, and trigger factor when it is bound to the ribosome.

Its function is as follows. One of the early assembly proteins it binds 23S rRNA. One of the proteins that surrounds the polypeptide exit tunnel on the outside of the ribosome. Forms the main docking site for trigger factor binding to the ribosome. This chain is Large ribosomal subunit protein uL23, found in Bacillus mycoides (strain KBAB4) (Bacillus weihenstephanensis).